We begin with the raw amino-acid sequence, 85 residues long: RDS3 complex subunit 10 (85 aa).

Belongs to the SF3b complex composed of CUS1, HSH49, HSH155, RCP1, RDS3 and RSE1.

The protein localises to the nucleus. Functionally, involved in pre-mRNA splicing. Required for the SF3b integrity and prespliceosome assembly. This chain is RDS3 complex subunit 10 (YSF3), found in Saccharomyces cerevisiae (strain ATCC 204508 / S288c) (Baker's yeast).